The following is a 218-amino-acid chain: 3-isopropylmalate dehydratase small subunit (218 aa).

This sequence belongs to the LeuD family. LeuD type 1 subfamily. In terms of assembly, heterodimer of LeuC and LeuD.

It catalyses the reaction (2R,3S)-3-isopropylmalate = (2S)-2-isopropylmalate. It functions in the pathway amino-acid biosynthesis; L-leucine biosynthesis; L-leucine from 3-methyl-2-oxobutanoate: step 2/4. Catalyzes the isomerization between 2-isopropylmalate and 3-isopropylmalate, via the formation of 2-isopropylmaleate. The polypeptide is 3-isopropylmalate dehydratase small subunit (Alkalilimnicola ehrlichii (strain ATCC BAA-1101 / DSM 17681 / MLHE-1)).